We begin with the raw amino-acid sequence, 157 residues long: Dihydrofolate reductase type 1 (157 aa).

Residues K2–K156 form the DHFR domain.

This sequence belongs to the dihydrofolate reductase family. In terms of assembly, homodimer.

The enzyme catalyses (6S)-5,6,7,8-tetrahydrofolate + NADP(+) = 7,8-dihydrofolate + NADPH + H(+). It participates in cofactor biosynthesis; tetrahydrofolate biosynthesis; 5,6,7,8-tetrahydrofolate from 7,8-dihydrofolate: step 1/1. Functionally, key enzyme in folate metabolism. Catalyzes an essential reaction for de novo glycine and purine synthesis, and for DNA precursor synthesis. In Escherichia coli, this protein is Dihydrofolate reductase type 1 (dhfrI).